The primary structure comprises 451 residues: Putative gluconeogenesis factor (451 aa).

The protein belongs to the gluconeogenesis factor family.

It is found in the cytoplasm. Functionally, required for morphogenesis under gluconeogenic growth conditions. In Clostridium acetobutylicum (strain ATCC 824 / DSM 792 / JCM 1419 / IAM 19013 / LMG 5710 / NBRC 13948 / NRRL B-527 / VKM B-1787 / 2291 / W), this protein is Putative gluconeogenesis factor.